The sequence spans 568 residues: Urease subunit alpha (568 aa).

Residues 130–568 (GGIDTHIHFI…LPMAQRYFLF (439 aa)) enclose the Urease domain. His-135, His-137, and Lys-218 together coordinate Ni(2+). Position 218 is an N6-carboxylysine (Lys-218). Substrate is bound at residue His-220. Residues His-247 and His-273 each coordinate Ni(2+). His-321 (proton donor) is an active-site residue. Residue Asp-361 coordinates Ni(2+).

This sequence belongs to the metallo-dependent hydrolases superfamily. Urease alpha subunit family. Heterotrimer of UreA (gamma), UreB (beta) and UreC (alpha) subunits. Three heterotrimers associate to form the active enzyme. Requires Ni cation as cofactor. Post-translationally, carboxylation allows a single lysine to coordinate two nickel ions.

It localises to the cytoplasm. It catalyses the reaction urea + 2 H2O + H(+) = hydrogencarbonate + 2 NH4(+). Its pathway is nitrogen metabolism; urea degradation; CO(2) and NH(3) from urea (urease route): step 1/1. The chain is Urease subunit alpha from Burkholderia orbicola (strain MC0-3).